The primary structure comprises 237 residues: Octopine transport system permease protein OccQ (237 aa).

The region spanning 22-222 (TAMTMAVAFS…LITFVSGQVF (201 aa)) is the ABC transmembrane type-1 domain. The next 4 membrane-spanning stretches (helical) occupy residues 26–46 (MAVA…GAAA), 72–92 (LVIY…ASLF), 96–116 (GFVG…VSGA), and 202–222 (SFYL…GQVF).

This sequence belongs to the binding-protein-dependent transport system permease family. HisMQ subfamily.

The protein resides in the cell inner membrane. Functionally, component of the octopine active transport system probably consisting of four subunits: Q, M, P and T. This chain is Octopine transport system permease protein OccQ (occQ), found in Agrobacterium tumefaciens (strain Ach5).